A 208-amino-acid chain; its full sequence is Small ribosomal subunit protein uS4 (208 aa).

Residues 31–50 (SALDKRAYGPGQHGQRRTKT) are disordered. In terms of domain architecture, S4 RNA-binding spans 98-161 (RRLDNVVYRM…KSNPQVVRAM (64 aa)).

This sequence belongs to the universal ribosomal protein uS4 family. Part of the 30S ribosomal subunit. Contacts protein S5. The interaction surface between S4 and S5 is involved in control of translational fidelity.

Functionally, one of the primary rRNA binding proteins, it binds directly to 16S rRNA where it nucleates assembly of the body of the 30S subunit. Its function is as follows. With S5 and S12 plays an important role in translational accuracy. The sequence is that of Small ribosomal subunit protein uS4 from Helicobacter pylori (strain J99 / ATCC 700824) (Campylobacter pylori J99).